A 92-amino-acid polypeptide reads, in one-letter code: Small ribosomal subunit protein uS19 (92 aa).

Belongs to the universal ribosomal protein uS19 family.

In terms of biological role, protein S19 forms a complex with S13 that binds strongly to the 16S ribosomal RNA. The polypeptide is Small ribosomal subunit protein uS19 (Staphylococcus epidermidis (strain ATCC 35984 / DSM 28319 / BCRC 17069 / CCUG 31568 / BM 3577 / RP62A)).